Here is a 644-residue protein sequence, read N- to C-terminus: Sodium/potassium/calcium exchanger 3 (644 aa).

The first 44 residues, 1 to 44 (MRPSGDEDRARRRRRRRRRRDLLLSQLCFLASVALLLWSLSSLR), serve as a signal peptide directing secretion. Topologically, residues 45-107 (EQKELDLMDL…DIFTNEDRRQ (63 aa)) are extracellular. N-linked (GlcNAc...) asparagine glycans are attached at residues Asn-71 and Asn-86. A helical membrane pass occupies residues 108–128 (GAVVLHVLCAIYMFYALAIVC). Topologically, residues 129–153 (DDFFVPSLEKICERLHLSEDVAGAT) are cytoplasmic. The Alpha-1 repeat unit spans residues 149–189 (VAGATFMAAGSSAPELFTSVIGVFITKGDVGVGTIVGSAVF). Residues 154–174 (FMAAGSSAPELFTSVIGVFIT) form a helical membrane-spanning segment. The Extracellular segment spans residues 175-182 (KGDVGVGT). A helical transmembrane segment spans residues 183–203 (IVGSAVFNILCIIGVCGLFAG). Residues 204–210 (QVVALSS) are Cytoplasmic-facing. A helical membrane pass occupies residues 211 to 231 (WCLLRDSIYYTLSVIALIVFI). Residues 232–234 (YDE) are Extracellular-facing. Residues 235 to 255 (KVSWWESLVLVLMYLIYIVIM) traverse the membrane as a helical segment. Residues 256–484 (KYNACIHQCF…WFMVTFASST (229 aa)) are Cytoplasmic-facing. The residue at position 308 (Ser-308) is a Phosphoserine. The tract at residues 405-442 (AEAGNETENENEDNENDEEEEEDEDDDEGPYTPFDTPS) is disordered. Over residues 409 to 433 (NETENENEDNENDEEEEEDEDDDEG) the composition is skewed to acidic residues. A helical membrane pass occupies residues 485-505 (LWIAAFSYMMVWMVTIIGYTL). At 506–510 (GIPDV) the chain is on the extracellular side. A helical membrane pass occupies residues 511 to 531 (IMGITFLAAGTSVPDCMASLI). The Alpha-2 repeat unit spans residues 518-549 (AAGTSVPDCMASLIVARQGMGDMAVSNSIGSN). At 532 to 549 (VARQGMGDMAVSNSIGSN) the chain is on the cytoplasmic side. A helical membrane pass occupies residues 550 to 570 (VFDILIGLGLPWALQTLAVDY). At 571–580 (GSYIRLNSRG) the chain is on the extracellular side. The helical transmembrane segment at 581–601 (LIYSVGLLLASVFVTVFGVHL) threads the bilayer. Residues 602–615 (NKWQLDKKLGCGCL) lie on the Cytoplasmic side of the membrane. A helical transmembrane segment spans residues 616 to 636 (LLYGVFLCFSIMTEFNVFTFV). Residues 637–644 (NLPMCGDH) are Extracellular-facing.

Belongs to the Ca(2+):cation antiporter (CaCA) (TC 2.A.19) family. SLC24A subfamily. Abundant in the brain. Expressed at low levels in the aorta, uterus and intestine.

It localises to the cell membrane. It catalyses the reaction Ca(2+)(out) + K(+)(out) + 4 Na(+)(in) = Ca(2+)(in) + K(+)(in) + 4 Na(+)(out). Its function is as follows. Calcium, potassium:sodium antiporter that transports 1 Ca(2+) and 1 K(+) in exchange for 4 Na(+). The chain is Sodium/potassium/calcium exchanger 3 (SLC24A3) from Homo sapiens (Human).